The following is a 169-amino-acid chain: Required for excision 1-B domain-containing protein (169 aa).

This is Required for excision 1-B domain-containing protein from Mus musculus (Mouse).